Here is a 600-residue protein sequence, read N- to C-terminus: NADPH-dependent diflavin oxidoreductase 1 (600 aa).

The Flavodoxin-like domain maps to 6-150 (LLILYGSQTG…VVDPWLKDLW (145 aa)). FMN-binding positions include 12 to 17 (SQTGTA), 59 to 62 (ATTG), 97 to 106 (LGDSSYPKFN), and D132. The 240-residue stretch at 210 to 449 (IHPFLAPVLS…WVKKGSMKFP (240 aa)) folds into the FAD-binding FR-type domain. Residues R354, 386–389 (RAFS), and 420–423 (GLCS) contribute to the FAD site. NADP(+) is bound by residues T463, 518–519 (SR), and 524–528 (KIYVQ). W599 is an FAD binding site.

The protein belongs to the NADPH-dependent diflavin oxidoreductase NDOR1 family. This sequence in the N-terminal section; belongs to the flavodoxin family. It in the C-terminal section; belongs to the flavoprotein pyridine nucleotide cytochrome reductase family. As to quaternary structure, interacts with ciapin1; as part of the cytosolic iron-sulfur (Fe-S) protein assembly (CIA) machinery. FAD is required as a cofactor. FMN serves as cofactor.

It localises to the cytoplasm. The protein resides in the perinuclear region. It carries out the reaction 2 oxidized [2Fe-2S]-[protein] + NADPH = 2 reduced [2Fe-2S]-[protein] + NADP(+) + H(+). In terms of biological role, NADPH-dependent reductase which is a central component of the cytosolic iron-sulfur (Fe-S) protein assembly (CIA) machinery. Transfers electrons from NADPH via its FAD and FMN prosthetic groups to the [2Fe-2S] cluster of ciapin1, another key component of the CIA machinery. In turn, this reduced cluster provides electrons for assembly of cytosolic iron-sulfur cluster proteins. It can also reduce the [2Fe-2S] cluster of cisd1 and activate this protein implicated in Fe/S cluster repair. The polypeptide is NADPH-dependent diflavin oxidoreductase 1 (Xenopus laevis (African clawed frog)).